The sequence spans 171 residues: O-acetyl-ADP-ribose deacetylase 2 (171 aa).

The 171-residue stretch at 1 to 171 (MNKITVIQGD…NYDLYLKLLN (171 aa)) folds into the Macro domain. Substrate contacts are provided by residues 10 to 11 (DI), Asn-24, 32 to 34 (GVD), and 121 to 125 (STGIY). Asp-34 (proton acceptor) is an active-site residue.

The protein belongs to the MacroD-type family. YmdB subfamily. In terms of assembly, homodimer. Interacts with RNase III.

The enzyme catalyses 3''-O-acetyl-ADP-D-ribose + H2O = ADP-D-ribose + acetate + H(+). The catalysed reaction is 2''-O-acetyl-ADP-D-ribose + H2O = ADP-D-ribose + acetate + H(+). In terms of biological role, deacetylates O-acetyl-ADP ribose to yield ADP-ribose and free acetate. Down-regulates ribonuclease 3 (RNase III) activity. Acts by interacting directly with the region of the ribonuclease that is required for dimerization/activation. The protein is O-acetyl-ADP-ribose deacetylase 2 of Pantoea vagans (strain C9-1) (Pantoea agglomerans (strain C9-1)).